The primary structure comprises 331 residues: Ferredoxin--NADP reductase (331 aa).

FAD contacts are provided by glutamate 38, glutamine 46, tyrosine 51, alanine 91, leucine 125, aspartate 282, and serine 323.

It belongs to the ferredoxin--NADP reductase type 2 family. Homodimer. It depends on FAD as a cofactor.

The catalysed reaction is 2 reduced [2Fe-2S]-[ferredoxin] + NADP(+) + H(+) = 2 oxidized [2Fe-2S]-[ferredoxin] + NADPH. The sequence is that of Ferredoxin--NADP reductase from Deinococcus geothermalis (strain DSM 11300 / CIP 105573 / AG-3a).